The primary structure comprises 291 residues: Taste receptor type 2 member 16 (291 aa).

A topological domain (extracellular) is located at residue methionine 1. A helical transmembrane segment spans residues 2–22 (IPIQLTVFFMIIYVLESLTII). The Cytoplasmic portion of the chain corresponds to 23–41 (VQSSLIVAVLGREWLQVRR). Residues 42–62 (LMPVDMILISLGISRFCLQWA) form a helical membrane-spanning segment. Topologically, residues 63–84 (SMLNNFCSYFNLNYVLCNLTIT) are extracellular. Asparagine 80 carries N-linked (GlcNAc...) asparagine glycosylation. The chain crosses the membrane as a helical span at residues 85–105 (WEFFNILTFWLNSLLTVFYCI). The Cytoplasmic portion of the chain corresponds to 106-125 (KVSSFTHHIFLWLRWRILRL). Residues 126–146 (FPWILLGSLMITCVTIIPSAI) form a helical membrane-spanning segment. At 147–182 (GNYIQIQLLTMEHLPRNSTVTDKLEKFHQYQFQAHT) the chain is on the extracellular side. Asparagine 163 carries N-linked (GlcNAc...) asparagine glycosylation. A helical membrane pass occupies residues 183 to 203 (VALVIPFILFLASTILLMASL). The Cytoplasmic portion of the chain corresponds to 204–228 (TKQIQHHSTGHCNPSMKAHFTALRS). A helical transmembrane segment spans residues 229–249 (LAVLFIVFTSYFLTILITIIG). At 250-257 (TLFDKRCW) the chain is on the extracellular side. The chain crosses the membrane as a helical span at residues 258–278 (LWVWEAFVYAFILMHSTSLML). At 279-291 (SSPTLKRILKGKC) the chain is on the cytoplasmic side.

Belongs to the G-protein coupled receptor T2R family. As to quaternary structure, interacts with RTP3 and RTP4.

Its subcellular location is the cell membrane. Its function is as follows. Receptor that may play a role in the perception of bitterness and is gustducin-linked. May play a role in sensing the chemical composition of the gastrointestinal content. The activity of this receptor may stimulate alpha gustducin, mediate PLC-beta-2 activation and lead to the gating of TRPM5. This Pan troglodytes (Chimpanzee) protein is Taste receptor type 2 member 16 (TAS2R16).